Here is a 68-residue protein sequence, read N- to C-terminus: Purkinje cell protein 4-like protein 1 (68 aa).

Residues 1-16 (MSELNTKTPPAANQAS) show a composition bias toward polar residues. The interval 1 to 42 (MSELNTKTPPAANQASDPEEKGKPGSIKKAEEEEEIDIDLTA) is disordered. Phosphothreonine is present on T8. Positions 18 to 31 (PEEKGKPGSIKKAE) are enriched in basic and acidic residues. Residues 45-68 (TEKAALAIQGKFRRFQKRKKDSSS) form the IQ domain.

It belongs to the PCP4 family. Expressed in laminar and nuclear structures of the CNS.

This is Purkinje cell protein 4-like protein 1 (Pcp4l1) from Mus musculus (Mouse).